Consider the following 201-residue polypeptide: Natural cytotoxicity triggering receptor 3 (201 aa).

Positions 1 to 18 (MAWMLLLILIMVHPGSCA) are cleaved as a signal peptide. In terms of domain architecture, Ig-like spans 19–126 (LWVSQPPEIR…VGTGNGTRLV (108 aa)). Topologically, residues 19 to 135 (LWVSQPPEIR…VVEKEHPQLG (117 aa)) are extracellular. A disulfide bridge links cysteine 39 with cysteine 108. Asparagine 42 and asparagine 121 each carry an N-linked (GlcNAc...) asparagine glycan. Residues 136 to 156 (AGTVLLLRAGFYAVSFLSVAV) form a helical membrane-spanning segment. Residues 157–201 (GSTVYYQGKCLTWKGPRRQLPAVVPAPLPPPCGSSAHLLPPVPGG) lie on the Cytoplasmic side of the membrane.

Belongs to the natural cytotoxicity receptor (NCR) family. As to quaternary structure, homodimer in the unliganted form. Interacts with CD3Z. Interacts with and is activated by binding to NCR3LG1. Interacts with and is activated by binding to BAG6. Interacts with and is inhibited by binding to LGALS3. Selectively expressed by all resting and activated NK cells and weakly expressed in spleen.

Its subcellular location is the cell membrane. Its function is as follows. Cell membrane receptor of natural killer/NK cells that is activated by binding of extracellular ligands including BAG6 and NCR3LG1. Stimulates NK cells cytotoxicity toward neighboring cells producing these ligands. It controls, for instance, NK cells cytotoxicity against tumor cells. Engagement of NCR3 by BAG6 also promotes myeloid dendritic cells (DC) maturation, both through killing DCs that did not acquire a mature phenotype, and inducing the release by NK cells of TNFA and IFNG which promote DC maturation. This Homo sapiens (Human) protein is Natural cytotoxicity triggering receptor 3.